The chain runs to 313 residues: DDRGK domain-containing protein 1 (313 aa).

Residues 1–28 (MVSPVVYLVVAALLVGLILFLTRGRGRA) traverse the membrane as a helical segment. Positions 1–113 (MVSPVVYLVV…IEKPVETHLS (113 aa)) are mediates interaction with CDK5RAP3. Residues 29-313 (AAAAQEPLHN…GRETPAQAPA (285 aa)) are Cytoplasmic-facing. The disordered stretch occupies residues 40–88 (EVPAAAGRVARPQPLEPEEQRAAGRPRRRRDLGSRLQAQRRAQRVAWAD). S73 and S113 each carry phosphoserine. A compositionally biased stretch (low complexity) spans 73–87 (SRLQAQRRAQRVAWA). The tract at residues 117–215 (GAKKLRKLEE…MTEEQSHSFL (99 aa)) is mediates interaction with TRIP4. The disordered stretch occupies residues 130–185 (RKAQREAEEAEREERKRLESQREAEWKKEEERLRLEEEQKEEEERKAQEEQAQREH). The UFM1-interacting motif (UFIM) signature appears at 194 to 208 (TFVVVEEGVGETMTE). The mediates interaction with UFL1 stretch occupies residues 215 to 313 (LAEFINYIKQ…GRETPAQAPA (99 aa)). The PCI domain maps to 228–272 (VLLEDLASQVGLRTQDTINRIQDLLAEGTLTGVIDDRGKFIYITP). K266 participates in a covalent cross-link: Glycyl lysine isopeptide (Lys-Gly) (interchain with G-Cter in UFM1).

The protein belongs to the DDRGK1 family. As to quaternary structure, component of the UFM1 ribosome E3 ligase (UREL) complex, composed of UFL1, DDRGK1 and CDK5RAP3. Interacts with (unphosphorylated) ERN1/IRE1-alpha; interaction is dependent on UFM1 and takes place in response to endoplasmic reticulum stress, regulating ERN1/IRE1-alpha stability. Interacts with NFKBIA. Interacts with SOX9. In terms of processing, ubiquitinated. Ubiquitination probably triggers proteasomal degradation and is negatively regulated by UFL1, the enzyme involved in the ufmylation of DDRGK1. Post-translationally, ufmylated; conjugated to ubiquitin-like protein UFM1, probably at Lys-266 by UFL1. The relevance of ufmylation is however unclear: as DDRGK1 acts as a substrate adapter for ufmylation, it is uncertain whether ufmylation is a collateral effect of the ufmylation process or whether it is required to regulate its activity.

The protein localises to the endoplasmic reticulum membrane. Component of the UFM1 ribosome E3 ligase (UREL) complex, a multiprotein complex that catalyzes ufmylation of endoplasmic reticulum-docked proteins. The UREL complex plays a key role in ribosome recycling by mediating mono-ufmylation of the RPL26/uL24 subunit of the 60S ribosome following ribosome dissociation: ufmylation weakens the junction between post-termination 60S subunits and SEC61 translocons, promoting release and recycling of the large ribosomal subunit from the endoplasmic reticulum membrane. Ufmylation of RPL26/uL24 and subsequent 60S ribosome recycling either take place after normal termination of translation or after ribosome stalling during cotranslational translocation at the endoplasmic reticulum. Within the UREL complex, DDRGK1 tethers the complex to the endoplasmic reticulum membrane to restrict its activity to endoplasmic reticulum-docked ribosomes and acts as an ufmylation 'reader': following RPL26/uL24 ufmylation, DDRGK1 specifically binds to ufmylated RPL26/uL24 via its UFIM motif, resulting in stable association between the 60S ribosome and the UREL complex, followed by dissociation of the 60S ribosome subunit from the endoplasmic reticulum membrane. The UREL complex is also involved in reticulophagy in response to endoplasmic reticulum stress by promoting ufmylation of proteins such as CYB5R3 and RPN1, thereby promoting lysosomal degradation of ufmylated proteins. Ufmylation-dependent reticulophagy inhibits the unfolded protein response (UPR) by regulating ERN1/IRE1-alpha stability. Acts as a regulator of immunity by promoting differentiation of B-cells into plasma cells: acts by promoting expansion of the endoplasmic reticulum and regulating the unfolded protein response (UPR). May also be required for TRIP4 ufmylation. May play a role in NF-kappa-B-mediated transcription through regulation of the phosphorylation and the degradation of NFKBIA, the inhibitor of NF-kappa-B. Plays a role in cartilage development through SOX9, inhibiting the ubiquitin-mediated proteasomal degradation of this transcriptional regulator. Required for stabilization and ufmylation of ATG9A. This is DDRGK domain-containing protein 1 from Bos taurus (Bovine).